Here is a 165-residue protein sequence, read N- to C-terminus: Protein SprT (165 aa).

A SprT-like domain is found at 22 to 163 (LAQANLKLDR…RCVHCGEPLV (142 aa)). Histidine 78 is a binding site for Zn(2+). The active site involves glutamate 79. Residue histidine 82 participates in Zn(2+) binding.

The protein belongs to the SprT family. Requires Zn(2+) as cofactor.

Its subcellular location is the cytoplasm. The polypeptide is Protein SprT (Salmonella agona (strain SL483)).